Here is a 138-residue protein sequence, read N- to C-terminus: Superoxide dismutase [Mn] (138 aa).

His-2, His-49, Asp-133, and His-137 together coordinate Mn(2+).

It belongs to the iron/manganese superoxide dismutase family. Mn(2+) is required as a cofactor.

The enzyme catalyses 2 superoxide + 2 H(+) = H2O2 + O2. Functionally, destroys superoxide anion radicals which are normally produced within the cells and which are toxic to biological systems. The sequence is that of Superoxide dismutase [Mn] (sodA) from Mycobacterium szulgai.